Here is a 633-residue protein sequence, read N- to C-terminus: 1-deoxy-D-xylulose-5-phosphate synthase (633 aa).

Thiamine diphosphate-binding positions include H72 and 113-115; that span reads GHS. D144 is a binding site for Mg(2+). Thiamine diphosphate is bound by residues 145-146, N173, Y284, and E367; that span reads GA. N173 serves as a coordination point for Mg(2+).

The protein belongs to the transketolase family. DXPS subfamily. In terms of assembly, homodimer. Mg(2+) is required as a cofactor. Requires thiamine diphosphate as cofactor.

It carries out the reaction D-glyceraldehyde 3-phosphate + pyruvate + H(+) = 1-deoxy-D-xylulose 5-phosphate + CO2. It functions in the pathway metabolic intermediate biosynthesis; 1-deoxy-D-xylulose 5-phosphate biosynthesis; 1-deoxy-D-xylulose 5-phosphate from D-glyceraldehyde 3-phosphate and pyruvate: step 1/1. Its function is as follows. Catalyzes the acyloin condensation reaction between C atoms 2 and 3 of pyruvate and glyceraldehyde 3-phosphate to yield 1-deoxy-D-xylulose-5-phosphate (DXP). This is 1-deoxy-D-xylulose-5-phosphate synthase from Bacillus licheniformis (strain ATCC 14580 / DSM 13 / JCM 2505 / CCUG 7422 / NBRC 12200 / NCIMB 9375 / NCTC 10341 / NRRL NRS-1264 / Gibson 46).